The chain runs to 339 residues: Biotin synthase (339 aa).

The region spanning 55–282 is the Radical SAM core domain; sequence NAVQLSTLLS…KAVVRLSAGR (228 aa). Residues C70, C74, and C77 each contribute to the [4Fe-4S] cluster site. Residues C114, C145, C205, and R277 each coordinate [2Fe-2S] cluster.

Belongs to the radical SAM superfamily. Biotin synthase family. As to quaternary structure, homodimer. [4Fe-4S] cluster serves as cofactor. Requires [2Fe-2S] cluster as cofactor.

The enzyme catalyses (4R,5S)-dethiobiotin + (sulfur carrier)-SH + 2 reduced [2Fe-2S]-[ferredoxin] + 2 S-adenosyl-L-methionine = (sulfur carrier)-H + biotin + 2 5'-deoxyadenosine + 2 L-methionine + 2 oxidized [2Fe-2S]-[ferredoxin]. It participates in cofactor biosynthesis; biotin biosynthesis; biotin from 7,8-diaminononanoate: step 2/2. Its function is as follows. Catalyzes the conversion of dethiobiotin (DTB) to biotin by the insertion of a sulfur atom into dethiobiotin via a radical-based mechanism. The sequence is that of Biotin synthase from Burkholderia orbicola (strain MC0-3).